Reading from the N-terminus, the 476-residue chain is PRAME family member 5 (476 aa).

An LRR 1; degenerate repeat occupies 97-124 (RWKLQVLDLQDVCENFWMVWSEAMAHGC). One copy of the LRR 2; degenerate repeat lies at 179–203 (HLCCKKLKILGMPFRNIRSILKMVN). An LRR 3; degenerate repeat occupies 204–230 (LDCIQEVEVNCKWVLPILTQFTPYLGH). The stretch at 231 to 266 (MRNLQKLVLSHMDVSRYVSPEQKKEIVTQFTTQFLK) is one LRR 4; degenerate repeat. LRR repeat units follow at residues 267-292 (LCCL…LSCL), 293-324 (KTSL…SQLK), 325-345 (TLDL…QILL), 349-376 (AATL…ALSR), and 377-401 (CFEL…LLSH).

This sequence belongs to the PRAME family.

The sequence is that of PRAME family member 5 from Homo sapiens (Human).